Consider the following 638-residue polypeptide: MGDVEELKFSAEVGKVLSLVVHSLYTNKDIFLREVISNASDACDKLRYLFCSDQSLMEAGEELRIVISVDRDRRELTVRDNGIGMSRKELIDNLGTIASSGTQRFLEEFKGGKAQGCDLIGKFGVGFYSVFMVATDVVVESCKAGEKVGHRWQSSGDGVFSVSTIEGDVSRGTKVILTLREDEFDFLDKFRIEHIVTTYSDHVGYPIYLIASDGTEEKLNSGVAIWTKPKDEISESEHMEFFRSISHIGSNPWMVIHNKNEGTIEYINLLYVPSVKPFDLFHPDRRCSVKLYVNRVFITEDNVQVIPQYMRFLRGVIDSSDLPLNISRETLQNNMVIEKIKASVTRRVLTSLREKADSDPVSYKTFWENFGPVLKEGLCEAMDTESRESILSVCRFYSSNSKEGELISLGDYISRMKPGQEHIFYLSGNDLESAMRSPQIEGMVSNGIEVVLLVDPVDDFWTSVVLEYKGVPFKSVTRVDESDLEKFTEGDDQQSTKKKKEKKDTDDAQQKENVEAFIDYMKKVLGDSVSDIKVSRKLTTSLVCLAVPEHALDIRMERFLREQKQLSYKGSRILELNIKHPVLSGLLREYKDNGESELLENMVHVLFDQACIIEGEEVNSAVDFANRMNQVLARLFKK.

The interval 1-328 (MGDVEELKFS…SSDLPLNISR (328 aa)) is a; substrate-binding. Positions 329 to 558 (ETLQNNMVIE…EHALDIRMER (230 aa)) are b. Residues 484 to 508 (LEKFTEGDDQQSTKKKKEKKDTDDA) form a disordered region. Residues 559 to 638 (FLREQKQLSY…NQVLARLFKK (80 aa)) are c.

The protein belongs to the heat shock protein 90 family. Homodimer.

It localises to the cytoplasm. In terms of biological role, molecular chaperone. Has ATPase activity. The polypeptide is Chaperone protein HtpG (Anaplasma marginale (strain St. Maries)).